Reading from the N-terminus, the 348-residue chain is Keratocan (348 aa).

The N-terminal stretch at 1 to 26 (MSRLNLTMEVLLVAFVAVFLTSQVHS) is a signal peptide. The LRRNT domain occupies 40–69 (ACPKECNCPPNFPNAVYCDNKGLKSIPVIP). Disulfide bonds link Cys-41/Cys-47 and Cys-45/Cys-57. LRR repeat units lie at residues 70-92 (PYTW…ALRN), 93-118 (ATQL…ALRA), 119-140 (MSNL…SPLP), 141-163 (AKLE…VFSG), 165-189 (GHLT…SLKG), 190-213 (LNNL…LPPT), 215-234 (TQIF…YFKG), 235-260 (LPKV…VFNL), 262-280 (SILD…PVIS), and 281-303 (SGLE…DICP). Asn-92 is a glycosylation site (N-linked (GlcNAc...) (keratan sulfate) asparagine). N-linked (GlcNAc...) (keratan sulfate) asparagine glycosylation occurs at Asn-259. N-linked (GlcNAc...) asparagine glycosylation is present at Asn-297. Cys-302 and Cys-339 are disulfide-bonded.

The protein belongs to the small leucine-rich proteoglycan (SLRP) family. SLRP class II subfamily. Post-translationally, glycosylated. Contains keratan sulfate chains. As to expression, expressed in eye, where it is found in the corneal epithelial layer and to a lesser extent in the stromal layer (at protein level).

It is found in the secreted. The protein resides in the extracellular space. The protein localises to the extracellular matrix. Its function is as follows. May be important in developing and maintaining corneal transparency and for the structure of the stromal matrix. This is Keratocan from Danio rerio (Zebrafish).